We begin with the raw amino-acid sequence, 514 residues long: Ribonuclease Y (514 aa).

The chain crosses the membrane as a helical span at residues 2-22; that stretch reads EDLIVAIVVGAFSSAISIFVV. The KH domain maps to 204–268; it reads LINNIPLNDE…VATKTIRELL (65 aa). Positions 330–423 constitute an HD domain; the sequence is ALAHTLEVAH…VCAADALSAA (94 aa).

The protein belongs to the RNase Y family.

It is found in the cell membrane. Endoribonuclease that initiates mRNA decay. The protein is Ribonuclease Y of Aliarcobacter butzleri (strain RM4018) (Arcobacter butzleri).